We begin with the raw amino-acid sequence, 625 residues long: Sorting nexin-41 (625 aa).

A disordered region spans residues methionine 1–alanine 90. Residues serine 54 to alanine 86 show a composition bias toward low complexity. Residues valine 98–tryptophan 235 enclose the PX domain. A 1,2-diacyl-sn-glycero-3-phospho-(1D-myo-inositol-3-phosphate)-binding residues include arginine 153, serine 155, lysine 179, and arginine 202. 2 coiled-coil regions span residues glutamine 437–leucine 469 and glutamine 539–leucine 563.

This sequence belongs to the sorting nexin family. Binds to SNX4.

It is found in the prevacuolar compartment. Its subcellular location is the endosome. The protein resides in the endosome membrane. Its function is as follows. Involved in proper sorting of the v-SNARE protein SNC1. This is Sorting nexin-41 (SNX41) from Saccharomyces cerevisiae (strain ATCC 204508 / S288c) (Baker's yeast).